Consider the following 168-residue polypeptide: Envelope glycoprotein L (168 aa).

Residues 1-22 (MMWKWVTLLLFVLVCGDNPVNA) form the signal peptide. The interaction with gH stretch occupies residues 25–138 (HNPFVCCHQK…TDSSGFKNNL (114 aa)).

The protein belongs to the herpesviridae glycoprotein L family. In terms of assembly, interacts with glycoprotein H (gH); this interaction is necessary for the correct processing and cell surface expression of gH. The heterodimer gH/gL seems to interact with gB trimers during fusion.

Its subcellular location is the virion membrane. It localises to the host cell membrane. The protein localises to the host Golgi apparatus. It is found in the host trans-Golgi network. In terms of biological role, the heterodimer glycoprotein H-glycoprotein L is required for the fusion of viral and plasma membranes leading to virus entry into the host cell. Acts as a functional inhibitor of gH and maintains gH in an inhibited form. Upon binding to host integrins, gL dissociates from gH leading to activation of the viral fusion glycoproteins gB and gH. This is Envelope glycoprotein L from Connochaetes taurinus (Blue wildebeest).